A 66-amino-acid chain; its full sequence is Photosystem II reaction center protein H (66 aa).

Residues 27-47 form a helical membrane-spanning segment; the sequence is GAVPVMTVIGLLLLVFLVILL.

This sequence belongs to the PsbH family. As to quaternary structure, PSII is composed of 1 copy each of membrane proteins PsbA, PsbB, PsbC, PsbD, PsbE, PsbF, PsbH, PsbI, PsbJ, PsbK, PsbL, PsbM, PsbT, PsbX, PsbY, Psb30/Ycf12, peripheral proteins PsbO, CyanoQ (PsbQ), PsbU, PsbV and a large number of cofactors. It forms dimeric complexes.

The protein resides in the cellular thylakoid membrane. In terms of biological role, one of the components of the core complex of photosystem II (PSII), required for its stability and/or assembly. PSII is a light-driven water:plastoquinone oxidoreductase that uses light energy to abstract electrons from H(2)O, generating O(2) and a proton gradient subsequently used for ATP formation. It consists of a core antenna complex that captures photons, and an electron transfer chain that converts photonic excitation into a charge separation. The protein is Photosystem II reaction center protein H of Prochlorococcus marinus (strain MIT 9215).